A 189-amino-acid chain; its full sequence is Peptidyl-tRNA hydrolase (189 aa).

Residue tyrosine 14 participates in tRNA binding. Histidine 19 acts as the Proton acceptor in catalysis. TRNA contacts are provided by tyrosine 64, asparagine 66, and asparagine 112.

This sequence belongs to the PTH family. In terms of assembly, monomer.

The protein localises to the cytoplasm. The catalysed reaction is an N-acyl-L-alpha-aminoacyl-tRNA + H2O = an N-acyl-L-amino acid + a tRNA + H(+). Its function is as follows. Hydrolyzes ribosome-free peptidyl-tRNAs (with 1 or more amino acids incorporated), which drop off the ribosome during protein synthesis, or as a result of ribosome stalling. Catalyzes the release of premature peptidyl moieties from peptidyl-tRNA molecules trapped in stalled 50S ribosomal subunits, and thus maintains levels of free tRNAs and 50S ribosomes. The protein is Peptidyl-tRNA hydrolase of Clostridium botulinum (strain Okra / Type B1).